A 245-amino-acid polypeptide reads, in one-letter code: Brasilane terpene glycosides biosynthesis cluster protein D (245 aa).

2 consecutive C3H1-type zinc fingers follow at residues 121 to 152 and 161 to 185; these read KELKIICPWWLTDGYSCREHDQGKCPFYHDNV and ICHFWADGGRCTKSQKDCRFAHYPA. A disordered region spans residues 186–245; it reads PHRVTAPMPSKKKSKKLRSSVADDASHPDLGKARRHDPRDDEQNDEVWRNQGRARPGQEW. Residues 209 to 226 are compositionally biased toward basic and acidic residues; sequence DASHPDLGKARRHDPRDD.

Its function is as follows. Part of the gene cluster that mediates the biosynthesis of the brasilane terpene glycosides brasilane D and E. The biosynthesis starts with the activity of the terpene cyclase braA that converts farnesyl pyrophosphate into the sesquiterpene alcohol trichobrasilenol. Subsequently, trichobrasilenol is glycosylated by the O-glycosyltransferase braB putatively using UDP-GlcNAc as sugar donor to yield brasilane A. The latter then undergoes two rounds of oxidation performed by the cytochrome P450 monooxygenase braC. In the first round braC hydroxylates C-12 forming brasilane D, which serves as substrate in the second round to establish the epoxide at the bond between C-5 and C-10 and oxidize the alcohol at C-12 to an aldehyde leading to the final product brasilane E. In Annulohypoxylon truncatum (Hypoxylon truncatum), this protein is Brasilane terpene glycosides biosynthesis cluster protein D.